We begin with the raw amino-acid sequence, 210 residues long: Beta-crystallin A4 (210 aa).

Positions M1–H25 are N-terminal arm. Beta/gamma crystallin 'Greek key' domains follow at residues W26–S65 and G66–A112. A connecting peptide region spans residues C113 to D118. Beta/gamma crystallin 'Greek key' domains are found at residues S119–S160 and G161–Q209.

The protein belongs to the beta/gamma-crystallin family. Homo/heterodimer, or complexes of higher-order. The structure of beta-crystallin oligomers seems to be stabilized through interactions between the N-terminal arms.

Its function is as follows. Crystallins are the dominant structural components of the vertebrate eye lens. This chain is Beta-crystallin A4 (CRYBA4), found in Bos taurus (Bovine).